Consider the following 65-residue polypeptide: Photosystem II reaction center protein J (65 aa).

Residues 35–55 (LWLVATAGGTAVIFVLGIFFY) form a helical membrane-spanning segment.

Belongs to the PsbJ family. As to quaternary structure, PSII is composed of 1 copy each of membrane proteins PsbA, PsbB, PsbC, PsbD, PsbE, PsbF, PsbH, PsbI, PsbJ, PsbK, PsbL, PsbM, PsbT, PsbX, PsbY, Psb30/Ycf12, peripheral proteins PsbO, CyanoQ (PsbQ), PsbU, PsbV and a large number of cofactors. It forms dimeric complexes.

It is found in the cellular thylakoid membrane. Functionally, one of the components of the core complex of photosystem II (PSII). PSII is a light-driven water:plastoquinone oxidoreductase that uses light energy to abstract electrons from H(2)O, generating O(2) and a proton gradient subsequently used for ATP formation. It consists of a core antenna complex that captures photons, and an electron transfer chain that converts photonic excitation into a charge separation. This chain is Photosystem II reaction center protein J, found in Prochlorococcus marinus (strain NATL2A).